We begin with the raw amino-acid sequence, 469 residues long: ATP-dependent protease ATPase subunit HslU (469 aa).

ATP contacts are provided by residues Ile-24 and 66-71 (GVGKTE). Residues 159 to 179 (LFGSMNQPDEPAEEEVDQELK) form a disordered region. Residues Asp-282, Glu-347, and Arg-419 each contribute to the ATP site.

Belongs to the ClpX chaperone family. HslU subfamily. A double ring-shaped homohexamer of HslV is capped on each side by a ring-shaped HslU homohexamer. The assembly of the HslU/HslV complex is dependent on binding of ATP.

Its subcellular location is the cytoplasm. In terms of biological role, ATPase subunit of a proteasome-like degradation complex; this subunit has chaperone activity. The binding of ATP and its subsequent hydrolysis by HslU are essential for unfolding of protein substrates subsequently hydrolyzed by HslV. HslU recognizes the N-terminal part of its protein substrates and unfolds these before they are guided to HslV for hydrolysis. The chain is ATP-dependent protease ATPase subunit HslU from Listeria innocua serovar 6a (strain ATCC BAA-680 / CLIP 11262).